The sequence spans 1162 residues: Spike glycoprotein (1162 aa).

The signal sequence occupies residues 1 to 18 (MLVTPLLLVTLLCALCSA). Residues 19 to 1095 (VLYDSSSYVY…LKTYIKWPWY (1077 aa)) lie on the Extracellular side of the membrane. N-linked (GlcNAc...) asparagine; by host glycans are attached at residues N51, N77, N103, N144, N163, N178, N212, N237, N247, N264, N276, N306, N425, N447, N513, N530, N579, N591, N669, N676, and N714. The heptad repeat 1 (HR1) stretch occupies residues 769–874 (IPFATQLQAR…QVDRLITGRL (106 aa)). Residues 822 to 866 (QDVVSKQSAILTETMASLNKNFGAISSVIQEIYQQFDAIQANAQV) are a coiled coil. N947, N960, N979, N1014, N1038, N1051, and N1074 each carry an N-linked (GlcNAc...) asparagine; by host glycan. Residues 1024–1105 (NDDFDFNDEL…VWLAIAFATI (82 aa)) form a heptad repeat 2 (HR2) region. Residues 1055–1083 (PILDIDSEIDRIQGVIQGLNDSLIDLEKL) adopt a coiled-coil conformation. Residues 1096 to 1116 (VWLAIAFATIIFILILGWVFF) traverse the membrane as a helical segment. The Cytoplasmic segment spans residues 1117–1162 (MTGCCGCCCGCFGIMPLMSKCGKKSSYYTTFDNDVVTEQYRPKKSV). A Di-lysine motif motif is present at residues 1159-1162 (KKSV).

Belongs to the gammacoronaviruses spike protein family. In terms of assembly, homotrimer; each monomer consists of a S1 and a S2 subunit. The resulting peplomers protrude from the virus surface as spikes. Specific enzymatic cleavages in vivo yield mature proteins. The precursor is processed into S1 and S2 by host cell furin or furin-like protease to yield the mature S1 and S2 proteins. The cleavage site between S1 and S2 requires the optimal sequence [KR]-X-[KR]-R. Additionally, a second cleavage leads to the release of a fusion peptide after viral attachment to host cell receptor.

The protein resides in the virion membrane. It is found in the host endoplasmic reticulum-Golgi intermediate compartment membrane. Attaches the virion to the host cell membrane by interacting with sialic acids, initiating the infection. Functionally, mediates fusion of the virion and cellular membranes by acting as a class I viral fusion protein. Under the current model, the protein has at least 3 conformational states: pre-fusion native state, pre-hairpin intermediate state, and post-fusion hairpin state. During viral and target cell membrane fusion, the coiled coil regions (heptad repeats) assume a trimer-of-hairpins structure, positioning the fusion peptide in close proximity to the C-terminal region of the ectodomain. The formation of this structure appears to drive apposition and subsequent fusion of viral and target cell membranes. In terms of biological role, acts as a viral fusion peptide after S2 cleavage occurring upon virus endocytosis. The sequence is that of Spike glycoprotein from Avian infectious bronchitis virus (strain Beaudette) (IBV).